Consider the following 220-residue polypeptide: MAYRDQPLGELALSIPRASALFRKYDMDYCCGGKQTLARAAARKELDVEVIEAELAKLAEQPIEKDWRSAPLAEIIDHIIVRYHDRHREQLPELILQATKVERVHADKPSVPKGLTKYLTMLHEELSSHMMKEEQILFPMIKQGMGSQAMGPISVMESEHDEAGELLEVIKHTTNNVTPPPEACTTWKAMYNGINELIDDLMEHISLENNVLFPRALAGE.

It belongs to the RIC family. YtfE subfamily. In terms of assembly, homodimer.

It localises to the cytoplasm. Its function is as follows. Di-iron-containing protein involved in the repair of iron-sulfur clusters damaged by oxidative and nitrosative stress conditions. This Escherichia coli O6:K15:H31 (strain 536 / UPEC) protein is Iron-sulfur cluster repair protein YtfE.